Here is a 283-residue protein sequence, read N- to C-terminus: uncharacterized protein (283 aa).

Basic and acidic residues predominate over residues 208-232; it reads SMENKVNETQNSKEDEKKKNDGDGK. The interval 208 to 237 is disordered; sequence SMENKVNETQNSKEDEKKKNDGDGKRSKKK.

This is an uncharacterized protein from Saccharomyces cerevisiae (strain ATCC 204508 / S288c) (Baker's yeast).